An 845-amino-acid chain; its full sequence is ATP-binding cassette sub-family F member 1 (845 aa).

Residues 1-261 (MPKAPKQQPP…HLSKKEKKKL (261 aa)) are disordered. Residues S22 and S24 each carry the phosphoserine modification. The segment covering 29-39 (KKGKKDKKIKK) has biased composition (basic residues). Positions 47 to 64 (VEDKQAGEEEKVLKEKEQ) are enriched in basic and acidic residues. Over residues 73–85 (QKKKRDTRKGRRK) the composition is skewed to basic residues. Phosphoserine is present on S105. The residue at position 108 (T108) is a Phosphothreonine. Phosphoserine; by CK2 occurs at positions 109 and 140. The segment covering 147–160 (EKHPPKPAKPEKNR) has biased composition (basic and acidic residues). S166 carries the post-translational modification Phosphoserine. The span at 206-226 (EIIKEKEPPKQGKEKAKKAEQ) shows a compositional bias: basic and acidic residues. Residues 227–241 (GSEEEGEGEEEEEEG) show a composition bias toward acidic residues. S228 carries the post-translational modification Phosphoserine. The ABC transporter 1 domain occupies 304–548 (IKLEKFSISA…MYQQKQKELL (245 aa)). Position 336-343 (336-343 (GPNGKGKT)) interacts with ATP. Basic and acidic residues predominate over residues 559 to 580 (KELKAGGKSTKQAEKQTKEALT). A disordered region spans residues 559–602 (KELKAGGKSTKQAEKQTKEALTRKQQKCRRKNQDEESQEAPELL). Residue S595 is modified to Phosphoserine. The ABC transporter 2 domain maps to 625 to 840 (LGLHGVTFGY…VLEALGEVMV (216 aa)). 658–665 (GPNGVGKS) contacts ATP.

Belongs to the ABC transporter superfamily. ABCF family. EF3 subfamily. As to quaternary structure, isoform 2 interacts (via N-terminus) with EIF2S1; the interaction is independent of its phosphorylated status. Isoform 2 associates (via both ABC transporter domains) with the ribosomes. In terms of processing, isoform 2 is phosphorylated at phosphoserine and phosphothreonine. Isoform 2 phosphorylation on Ser-109 and Ser-140 by CK2 inhibits association of EIF2 with ribosomes. In terms of tissue distribution, ubiquitous.

It is found in the cytoplasm. The protein localises to the nucleus. It localises to the nucleoplasm. The protein resides in the nucleus envelope. In terms of biological role, isoform 2 is required for efficient Cap- and IRES-mediated mRNA translation initiation. Isoform 2 is not involved in the ribosome biogenesis. This is ATP-binding cassette sub-family F member 1 (ABCF1) from Homo sapiens (Human).